The following is a 156-amino-acid chain: ATP synthase subunit b (156 aa).

Residues 11–31 traverse the membrane as a helical segment; the sequence is AIAFVLFVLFCMKYVWPPLMA.

It belongs to the ATPase B chain family. F-type ATPases have 2 components, F(1) - the catalytic core - and F(0) - the membrane proton channel. F(1) has five subunits: alpha(3), beta(3), gamma(1), delta(1), epsilon(1). F(0) has three main subunits: a(1), b(2) and c(10-14). The alpha and beta chains form an alternating ring which encloses part of the gamma chain. F(1) is attached to F(0) by a central stalk formed by the gamma and epsilon chains, while a peripheral stalk is formed by the delta and b chains.

It localises to the cell inner membrane. F(1)F(0) ATP synthase produces ATP from ADP in the presence of a proton or sodium gradient. F-type ATPases consist of two structural domains, F(1) containing the extramembraneous catalytic core and F(0) containing the membrane proton channel, linked together by a central stalk and a peripheral stalk. During catalysis, ATP synthesis in the catalytic domain of F(1) is coupled via a rotary mechanism of the central stalk subunits to proton translocation. Its function is as follows. Component of the F(0) channel, it forms part of the peripheral stalk, linking F(1) to F(0). In Shigella boydii serotype 18 (strain CDC 3083-94 / BS512), this protein is ATP synthase subunit b.